Reading from the N-terminus, the 419-residue chain is uncharacterized protein (419 aa).

Residues C38, C44, C47, and C126 each contribute to the [4Fe-4S] cluster site. S-adenosyl-L-methionine contacts are provided by Q250, Y280, E301, and D346. The Nucleophile role is filled by C373.

Belongs to the class I-like SAM-binding methyltransferase superfamily. RNA M5U methyltransferase family.

This is an uncharacterized protein from Prochlorococcus marinus (strain SARG / CCMP1375 / SS120).